We begin with the raw amino-acid sequence, 876 residues long: Probable inactive ATP-dependent zinc metalloprotease FTSHI 2, chloroplastic (876 aa).

Positions 1-20 are disordered; it reads MACRFPLHSSSPSQFLSPEN. Residues 1–32 constitute a chloroplast transit peptide; that stretch reads MACRFPLHSSSPSQFLSPENRQRLPRNYPSIS. Polar residues predominate over residues 8-19; that stretch reads HSSSPSQFLSPE. The helical transmembrane segment at 59 to 79 threads the bilayer; the sequence is LLAIPITLTIISASLAKPSFA. A disordered region spans residues 256–276; sequence TMKAQKKQQERKKRKAVRKKK. Residues 258–275 are compositionally biased toward basic residues; the sequence is KAQKKQQERKKRKAVRKK. A helical membrane pass occupies residues 304-324; that stretch reads VATALGLVFFYIFYRVVVLNY. The disordered stretch occupies residues 350-370; the sequence is ELEREMEGIEEEDEEVEEGTG. The span at 357-368 shows a compositional bias: acidic residues; it reads GIEEEDEEVEEG. 450-457 is an ATP binding site; the sequence is GPPGVGKT.

The protein in the N-terminal section; belongs to the AAA ATPase family. It in the C-terminal section; belongs to the peptidase M41 family. As to quaternary structure, homooligomer. Interacts with FtsHi4.

It localises to the plastid. The protein resides in the chloroplast membrane. Its function is as follows. Required for plastid development during embryogenesis. Might be involved in chaperone functions or play a structural role in the thylakoid FtsH complex. The sequence is that of Probable inactive ATP-dependent zinc metalloprotease FTSHI 2, chloroplastic from Arabidopsis thaliana (Mouse-ear cress).